The chain runs to 60 residues: Conotoxin VnMRCL-012 (60 aa).

An N-terminal signal peptide occupies residues 1 to 22; sequence MRCLPVFVILLLLIASAPGVDA. A propeptide spanning residues 23–50 is cleaved from the precursor; that stretch reads QPKTKYDVPLASRHDFAKKTPKRLSKPR.

It belongs to the conotoxin T superfamily. In terms of processing, contains 2 disulfide bonds that can be either 'C1-C3, C2-C4' or 'C1-C4, C2-C3', since these disulfide connectivities have been observed for conotoxins with cysteine framework V (for examples, see AC P0DQQ7 and AC P81755). As to expression, expressed by the venom duct.

The protein resides in the secreted. The chain is Conotoxin VnMRCL-012 from Conus ventricosus (Mediterranean cone).